A 1943-amino-acid chain; its full sequence is Beta-L-arabinobiosidase (1943 aa).

A signal peptide (tat-type signal) is located at residues 1 to 32 (MHHSTRKRWLASIGAVAAVATLATGGAVTAQA). F5/8 type C domains lie at 892–1049 (TNVD…AYNT) and 1142–1302 (SKEI…AYAI). In terms of domain architecture, PKD spans 1061 to 1157 (TPQVDAYVSS…HGIPSDGTVN (97 aa)). FIVAR domains follow at residues 1678-1716 (ANGL…EQVA), 1746-1790 (DAAK…AAVQ), and 1823-1864 (QAKK…VDAA). The disordered stretch occupies residues 1875–1906 (TKVEQKPGSQQPGVTDTDKDDKDNKGDRVPPT). Positions 1890 to 1902 (DTDKDDKDNKGDR) are enriched in basic and acidic residues. The helical transmembrane segment at 1908 to 1928 (AAVSVVAAAAVLLTAAGVTIL) threads the bilayer.

The protein belongs to the glycosyl hydrolase 121 family. Predicted to be exported by the Tat system. The position of the signal peptide cleavage has not been experimentally proven.

The protein resides in the membrane. The catalysed reaction is 4-O-(beta-L-arabinofuranosyl-(1-&gt;2)-beta-L-arabinofuranosyl-(1-&gt;2)-beta-L-arabinofuranosyl)-(2S,4S)-4-hydroxyproline + H2O = 4-O-(beta-L-arabinofuranosyl)-(2S,4S)-4-hydroxyproline + beta-L-arabinofuranosyl-(1-&gt;2)-beta-L-arabinofuranose. Functionally, beta-L-arabinobiosidase that removes L-arabinofuranose-beta-1,2-L-arabinofuranose disaccharide from various substrates such as carrot extensin and potato lectin. Also acts on L-arabinofuranose (Ara)-beta-1,2-Ara-beta-1,2-Ara-beta-Hyp (Ara(3)-Hyp) but not on Ara-beta-1,3-Ara-beta-1,2-Ara-beta-1,2-Ara-beta--Hyp (Ara(4)-Hyp) or Ara-beta-1,2-Ara-beta-Hyp (Ara(2)-Hyp), suggesting a specificity for unmodified Ara(3)-Hyp substrate. In the presence of 1-alkanols, shows transglycosylation activity, retaining the anomeric configuration of the arabinofuranose residue. The sequence is that of Beta-L-arabinobiosidase (hypBA2) from Bifidobacterium longum subsp. longum (strain ATCC 15707 / DSM 20219 / JCM 1217 / NCTC 11818 / E194b).